A 207-amino-acid chain; its full sequence is MTIPSNRPRVGVLALQGDVREHLAALGDAGADAVPVRRADELATVDALVIPGGESTTMDKLARAFGLWEPLRARLAAGMPAFGSCAGMIMLAARVVDAAPGQETLGVLDITVRRNAFGRQVDSFEADIPLTGLDGGPLRAVFIRAPWVEETGPDVEVLGRVPSGRHAGRIVAVRQGAVLATAFHPELTADRRLHAFFVAMVAAQARV.

Residue 53–55 participates in L-glutamine binding; it reads GES. Cysteine 85 serves as the catalytic Nucleophile. L-glutamine contacts are provided by residues arginine 114 and 143–144; that span reads IR. Residues histidine 184 and glutamate 186 each act as charge relay system in the active site.

The protein belongs to the glutaminase PdxT/SNO family. In the presence of PdxS, forms a dodecamer of heterodimers. Only shows activity in the heterodimer.

The catalysed reaction is aldehydo-D-ribose 5-phosphate + D-glyceraldehyde 3-phosphate + L-glutamine = pyridoxal 5'-phosphate + L-glutamate + phosphate + 3 H2O + H(+). It carries out the reaction L-glutamine + H2O = L-glutamate + NH4(+). It functions in the pathway cofactor biosynthesis; pyridoxal 5'-phosphate biosynthesis. Functionally, catalyzes the hydrolysis of glutamine to glutamate and ammonia as part of the biosynthesis of pyridoxal 5'-phosphate. The resulting ammonia molecule is channeled to the active site of PdxS. This Acidothermus cellulolyticus (strain ATCC 43068 / DSM 8971 / 11B) protein is Pyridoxal 5'-phosphate synthase subunit PdxT.